The primary structure comprises 156 residues: Ribosomal RNA large subunit methyltransferase H (156 aa).

S-adenosyl-L-methionine-binding positions include leucine 73, glycine 104, and 123 to 128; that span reads ISSMTL.

Belongs to the RNA methyltransferase RlmH family. Homodimer.

Its subcellular location is the cytoplasm. The enzyme catalyses pseudouridine(1915) in 23S rRNA + S-adenosyl-L-methionine = N(3)-methylpseudouridine(1915) in 23S rRNA + S-adenosyl-L-homocysteine + H(+). Its function is as follows. Specifically methylates the pseudouridine at position 1915 (m3Psi1915) in 23S rRNA. This Burkholderia ambifaria (strain ATCC BAA-244 / DSM 16087 / CCUG 44356 / LMG 19182 / AMMD) (Burkholderia cepacia (strain AMMD)) protein is Ribosomal RNA large subunit methyltransferase H.